We begin with the raw amino-acid sequence, 408 residues long: Dual-specificity RNA methyltransferase RlmN (408 aa).

E126 functions as the Proton acceptor in the catalytic mechanism. Positions 132–373 (EEGRGTLCLS…NQAGYASPIR (242 aa)) constitute a Radical SAM core domain. C139 and C384 are disulfide-bonded. C146, C150, and C153 together coordinate [4Fe-4S] cluster. S-adenosyl-L-methionine-binding positions include 210 to 211 (GE), S242, 264 to 266 (SLH), and N341. C384 serves as the catalytic S-methylcysteine intermediate.

It belongs to the radical SAM superfamily. RlmN family. It depends on [4Fe-4S] cluster as a cofactor.

It is found in the cytoplasm. It catalyses the reaction adenosine(2503) in 23S rRNA + 2 reduced [2Fe-2S]-[ferredoxin] + 2 S-adenosyl-L-methionine = 2-methyladenosine(2503) in 23S rRNA + 5'-deoxyadenosine + L-methionine + 2 oxidized [2Fe-2S]-[ferredoxin] + S-adenosyl-L-homocysteine. It carries out the reaction adenosine(37) in tRNA + 2 reduced [2Fe-2S]-[ferredoxin] + 2 S-adenosyl-L-methionine = 2-methyladenosine(37) in tRNA + 5'-deoxyadenosine + L-methionine + 2 oxidized [2Fe-2S]-[ferredoxin] + S-adenosyl-L-homocysteine. In terms of biological role, specifically methylates position 2 of adenine 2503 in 23S rRNA and position 2 of adenine 37 in tRNAs. m2A2503 modification seems to play a crucial role in the proofreading step occurring at the peptidyl transferase center and thus would serve to optimize ribosomal fidelity. The sequence is that of Dual-specificity RNA methyltransferase RlmN from Bartonella henselae (strain ATCC 49882 / DSM 28221 / CCUG 30454 / Houston 1) (Rochalimaea henselae).